The following is a 56-amino-acid chain: Large ribosomal subunit protein bL32 (56 aa).

The protein belongs to the bacterial ribosomal protein bL32 family.

In Edwardsiella ictaluri (strain 93-146), this protein is Large ribosomal subunit protein bL32.